Reading from the N-terminus, the 116-residue chain is Antimicrobial peptide 1b (116 aa).

The first 34 residues, 1–34 (MKPHMSATVLRAPRVAAILLAVVLAAVLATAVNG), serve as a signal peptide directing secretion. The region spanning 35-77 (AQRCGDQARGAKCPNCLCCGKYGFCGSGDAYCGAGSCQSQCRG) is the Chitin-binding type-1 domain. Intrachain disulfides connect Cys-38–Cys-53, Cys-47–Cys-59, Cys-50–Cys-78, Cys-52–Cys-66, and Cys-71–Cys-75. Positions 80-116 (DDVVGQALPAEPGSTRATAASSASARGLNLTATTGGP) are excised as a propeptide. The segment at 89-116 (AEPGSTRATAASSASARGLNLTATTGGP) is disordered. Residues 93-105 (STRATAASSASAR) are compositionally biased toward low complexity.

Its function is as follows. Binds chitin. Has antifungal activity against the fungi F.solani (IC(50)=5 ug/ml), F.verticillioides (IC(50)=30 ug/ml), F.oxysporum (IC(50)=5 ug/ml), B.sorokiniana (IC(50)=5 ug/ml), B.cinerea (IC(50)=20 ug/ml) and N.crassa (IC(50)=10 ug/ml). Inhibits hyphal elongation and causes browning of hyphae in F.oxysporum. Causes destruction and discoloration of spores in B.sorokiniana. Inhibits the development of disease caused by the fungus P.infestans on potato tubers. Has antibacterial activity against the Gram-negative bacteria P.syringae and E.carotovora, and the Gram-positive bacterium C.michiganensis. Has antifungal activity against F.verticillioides (IC(50)=2.7 ug/ml). At concentrations between 45 uM and 225 uM, inhibits activity of metalloproteinase fungalysin Fv-cpm from F.verticillioides. This Triticum kiharae (Wheat) protein is Antimicrobial peptide 1b.